The following is a 625-amino-acid chain: Baeyer-Villiger monooxygenase ATR8 (625 aa).

Residues Asp112, 120–123, Asp132, and Tyr138 each bind FAD; that span reads TWYW. Position 130 to 132 (130 to 132) interacts with NADP(+); sequence QCD. Residues 266 to 272, 289 to 290, and 405 to 406 contribute to the NADP(+) site; these read TGATAIQ, RT, and KR.

Belongs to the FAD-binding monooxygenase family. The cofactor is FAD.

Its pathway is mycotoxin biosynthesis. In terms of biological role, baeyer-Villiger monooxygenase; part of the core atranone cluster (CAC) which products are predicted to catalyze most or all steps of mycotoxin atranone synthesis, starting from geranylgeranyl pyrophosphate (GGPP). The initial cyclization of GGPP to dolabellane is probably performed by the terpene cyclase ATR13. The Baeyer-Villiger oxidation near the end of the atranone synthesis, which converts atranones D and E to atranones F and G is predicted to be catalyzed by the monooxygenase ATR8. Of the CAC's other predicted gene products, the reducing PKS ATR6 might synthesize a polyketide chain. This polyketide is probably transferred onto the atranone backbone by the polyketide transferase ATR5. Other predicted CAC products include 4 oxygenases (ATR2, ATR3, ATR4, and ATR14), 3 short-chain reductases (ATR7, ATR9, and ATR10), and a methyltransferase (ATR12). These may all be involved in the various steps of atranone biosynthesis, although their specific roles must await experimental determination. The polypeptide is Baeyer-Villiger monooxygenase ATR8 (Stachybotrys chlorohalonatus (strain IBT 40285)).